The sequence spans 344 residues: Calcium homeostasis modulator protein 3 (344 aa).

The Cytoplasmic segment spans residues 1-20; the sequence is MDKFRMLFQHFQSSSESVMN. Positions 9 to 36 are central pore; it reads QHFQSSSESVMNGICLLLAAVTVKLYSS. A helical membrane pass occupies residues 21–36; that stretch reads GICLLLAAVTVKLYSS. At 37–48 the chain is on the extracellular side; the sequence is FDFNCPCLVHYN. 2 cysteine pairs are disulfide-bonded: cysteine 41–cysteine 126 and cysteine 43–cysteine 157. A helical membrane pass occupies residues 49–71; it reads ALYGLGLLLTPPLALFLCGLLAN. The Cytoplasmic portion of the chain corresponds to 72–98; that stretch reads RQSVVMVEEWRRPAGHRRKDPGIIRYM. Cysteine 99 carries the S-palmitoyl cysteine lipid modification. The chain crosses the membrane as a helical span at residues 99-124; it reads CSSVLQRALAAPLVWILLALLDGKCF. Residues 125-176 are Extracellular-facing; sequence VCAFSSSVDPEKFLDFANMTPSQVQLFLAKVPCKEDELVRDSPARKAVSRYL. An N-linked (GlcNAc...) asparagine glycan is attached at asparagine 142. Residues 177-202 traverse the membrane as a helical segment; sequence RCLSQAIGWSVTLLLIIAAFLARCLR. 2 S-palmitoyl cysteine lipidation sites follow: cysteine 200 and cysteine 204. Residues 203 to 344 lie on the Cytoplasmic side of the membrane; it reads PCFDQTVFLQ…GTRLSQHTDV (142 aa).

It belongs to the CALHM family. As to quaternary structure, associates with CALHM1 as a pore-forming subunit in a hetero-hexameric channel complex. In terms of processing, N-glycosylated. Post-translationally, palmitoylated by ZDHHC3 and ZDHHC15. Palmitoylation positively regulates CALHM1:CALHM3 channel conductance. As to expression, specifically expressed in circumvallate taste bud cells.

It localises to the basolateral cell membrane. The enzyme catalyses ATP(in) = ATP(out). It catalyses the reaction Ca(2+)(in) = Ca(2+)(out). The catalysed reaction is Na(+)(in) = Na(+)(out). It carries out the reaction K(+)(in) = K(+)(out). The enzyme catalyses chloride(in) = chloride(out). In terms of biological role, pore-forming subunit of gustatory voltage-gated ion channels required for sensory perception of sweet, bitter and umami tastes. With CALHM1 forms a fast-activating voltage-gated ATP-release channel in type II taste bud cells, ATP acting as a neurotransmitter to activate afferent neural gustatory pathways. Acts both as a voltage-gated and calcium-activated ion channel: mediates neuronal excitability in response to membrane depolarization and low extracellular Ca(2+) concentration. Has poor ion selectivity and forms a wide pore (around 14 Angstroms) that mediates permeation of small ions including Ca(2+), Na(+), K(+) and Cl(-), as well as larger ions such as ATP(4-). The polypeptide is Calcium homeostasis modulator protein 3 (Homo sapiens (Human)).